A 568-amino-acid polypeptide reads, in one-letter code: Poly(A) polymerase (568 aa).

Residues 87-89, 99-102, 100-102, Asp154, Lys215, Tyr224, and 233-234 each bind ATP; these read YGS, SDID, DID, and GV. Residues Asp100, Asp102, and Asp154 each contribute to the Mg(2+) site. Phosphoserine occurs at positions 452 and 550. Residues 525-568 are disordered; sequence NEKRPSKKSKRKNLDARHETVKRSKSDAASGDNINGTTAAVDVN. Over residues 536–550 the composition is skewed to basic and acidic residues; it reads KNLDARHETVKRSKS.

Belongs to the poly(A) polymerase family. In terms of assembly, component of the cleavage and polyadenylation factor (CPF) complex, which is composed of PTI1, SYC1, SSU72, GLC7, MPE1, REF2, PFS2, PTA1, YSH1/BRR5, SWD2, CFT2/YDH1, YTH1, CFT1/YHH1, FIP1 and PAP1. Interacts with FIR1 and RRP6. Mg(2+) is required as a cofactor. Requires Mn(2+) as cofactor.

The protein localises to the nucleus. The enzyme catalyses RNA(n) + ATP = RNA(n)-3'-adenine ribonucleotide + diphosphate. Polymerase component of the cleavage and polyadenylation factor (CPF) complex, which plays a key role in polyadenylation-dependent pre-mRNA 3'-end formation and cooperates with cleavage factors including the CFIA complex and NAB4/CFIB. The chain is Poly(A) polymerase (PAP1) from Saccharomyces cerevisiae (strain ATCC 204508 / S288c) (Baker's yeast).